A 185-amino-acid polypeptide reads, in one-letter code: Lipopolysaccharide export system protein LptA (185 aa).

Residues 1–27 (MKFKTNKLSLNLVLASSLLAASIPAFA) form the signal peptide. The interval 166–185 (PSQLQDKNNKGQTPAQKKGN) is disordered.

Belongs to the LptA family. As to quaternary structure, component of the lipopolysaccharide transport and assembly complex.

It localises to the periplasm. Involved in the assembly of lipopolysaccharide (LPS). Required for the translocation of LPS from the inner membrane to the outer membrane. May form a bridge between the inner membrane and the outer membrane, via interactions with LptC and LptD, thereby facilitating LPS transfer across the periplasm. This chain is Lipopolysaccharide export system protein LptA, found in Escherichia coli O157:H7.